The chain runs to 180 residues: Small ribosomal subunit protein uS5 (180 aa).

One can recognise an S5 DRBM domain in the interval 13–76 (LEERVVQINR…EAAKKNLIRV (64 aa)).

It belongs to the universal ribosomal protein uS5 family. In terms of assembly, part of the 30S ribosomal subunit. Contacts proteins S4 and S8.

Functionally, with S4 and S12 plays an important role in translational accuracy. Its function is as follows. Located at the back of the 30S subunit body where it stabilizes the conformation of the head with respect to the body. This is Small ribosomal subunit protein uS5 from Roseiflexus sp. (strain RS-1).